Consider the following 209-residue polypeptide: dITP/XTP pyrophosphatase (209 aa).

Residue 7 to 12 (TGNKGK) coordinates substrate. Asp73 functions as the Proton acceptor in the catalytic mechanism. Mg(2+) is bound at residue Asp73. Residues Ser74, 155 to 158 (FGYD), Lys178, and 183 to 184 (HR) contribute to the substrate site.

It belongs to the HAM1 NTPase family. In terms of assembly, homodimer. It depends on Mg(2+) as a cofactor.

The enzyme catalyses XTP + H2O = XMP + diphosphate + H(+). It carries out the reaction dITP + H2O = dIMP + diphosphate + H(+). It catalyses the reaction ITP + H2O = IMP + diphosphate + H(+). In terms of biological role, pyrophosphatase that catalyzes the hydrolysis of nucleoside triphosphates to their monophosphate derivatives, with a high preference for the non-canonical purine nucleotides XTP (xanthosine triphosphate), dITP (deoxyinosine triphosphate) and ITP. Seems to function as a house-cleaning enzyme that removes non-canonical purine nucleotides from the nucleotide pool, thus preventing their incorporation into DNA/RNA and avoiding chromosomal lesions. In Sulfurovum sp. (strain NBC37-1), this protein is dITP/XTP pyrophosphatase.